The following is a 91-amino-acid chain: CLAVATA3/ESR (CLE)-related protein 27 (91 aa).

A signal peptide spans 1–35; that stretch reads MTHAREWRSSLTTTLLMVILLSYMLHLFCVYSRVG. Residues Pro-83 and Pro-86 each carry the hydroxyproline modification. O-linked (Ara...) hydroxyproline glycosylation is present at Pro-86.

It belongs to the CLV3/ESR signal peptide family. In terms of processing, the O-glycosylation (arabinosylation) of the hydroxyproline Pro-86 enhances binding affinity of the CLE27p peptide for its receptor. In terms of tissue distribution, mostly expressed in apex, and, to a lower extent, in roots, leaves, flowers and siliques.

The protein resides in the secreted. It localises to the extracellular space. Extracellular signal peptide that regulates cell fate. Represses root apical meristem maintenance. This Arabidopsis thaliana (Mouse-ear cress) protein is CLAVATA3/ESR (CLE)-related protein 27.